A 461-amino-acid polypeptide reads, in one-letter code: Bifunctional protein GlmU (461 aa).

Residues 1–229 (MLKKEINVVI…CKEILGVNNK (229 aa)) form a pyrophosphorylase region. UDP-N-acetyl-alpha-D-glucosamine-binding positions include 11–14 (LAAG), lysine 25, glutamine 76, 81–82 (GT), 103–105 (YGD), glycine 140, glutamate 154, and asparagine 227. Aspartate 105 serves as a coordination point for Mg(2+). Asparagine 227 contributes to the Mg(2+) binding site. Residues 230–250 (LQLSILEKIFRKKQVNDLLLS) are linker. The N-acetyltransferase stretch occupies residues 251-461 (GVTLKDPNHF…PQKIIKKTDQ (211 aa)). Residues arginine 333 and lysine 351 each coordinate UDP-N-acetyl-alpha-D-glucosamine. The active-site Proton acceptor is the histidine 363. 2 residues coordinate UDP-N-acetyl-alpha-D-glucosamine: tyrosine 366 and asparagine 377. Acetyl-CoA contacts are provided by residues alanine 380, 386–387 (NY), and alanine 423.

This sequence in the N-terminal section; belongs to the N-acetylglucosamine-1-phosphate uridyltransferase family. In the C-terminal section; belongs to the transferase hexapeptide repeat family. In terms of assembly, homotrimer. Mg(2+) is required as a cofactor.

It is found in the cytoplasm. It catalyses the reaction alpha-D-glucosamine 1-phosphate + acetyl-CoA = N-acetyl-alpha-D-glucosamine 1-phosphate + CoA + H(+). The catalysed reaction is N-acetyl-alpha-D-glucosamine 1-phosphate + UTP + H(+) = UDP-N-acetyl-alpha-D-glucosamine + diphosphate. Its pathway is nucleotide-sugar biosynthesis; UDP-N-acetyl-alpha-D-glucosamine biosynthesis; N-acetyl-alpha-D-glucosamine 1-phosphate from alpha-D-glucosamine 6-phosphate (route II): step 2/2. The protein operates within nucleotide-sugar biosynthesis; UDP-N-acetyl-alpha-D-glucosamine biosynthesis; UDP-N-acetyl-alpha-D-glucosamine from N-acetyl-alpha-D-glucosamine 1-phosphate: step 1/1. It participates in bacterial outer membrane biogenesis; LPS lipid A biosynthesis. Its function is as follows. Catalyzes the last two sequential reactions in the de novo biosynthetic pathway for UDP-N-acetylglucosamine (UDP-GlcNAc). The C-terminal domain catalyzes the transfer of acetyl group from acetyl coenzyme A to glucosamine-1-phosphate (GlcN-1-P) to produce N-acetylglucosamine-1-phosphate (GlcNAc-1-P), which is converted into UDP-GlcNAc by the transfer of uridine 5-monophosphate (from uridine 5-triphosphate), a reaction catalyzed by the N-terminal domain. The polypeptide is Bifunctional protein GlmU (Buchnera aphidicola subsp. Schizaphis graminum (strain Sg)).